The primary structure comprises 381 residues: Trans-enoyl reductase iliB (381 aa).

NADP(+) is bound at residue 50–53 (VDGK). Substrate is bound at residue 145–152 (ATLATVGL). NADP(+) contacts are provided by residues 213 to 216 (SPGS), Tyr-231, and 278 to 279 (LD). 298–302 (TYTQF) is a binding site for substrate. Position 367–368 (367–368 (IS)) interacts with NADP(+).

The protein belongs to the zinc-containing alcohol dehydrogenase family. In terms of assembly, monomer.

It catalyses the reaction N-[(4E,6E,10S,12Z,14E)-6,10-dimethyl-3-oxohexadeca-4,6,12,14-tetraenoyl]-L-tyrosyl-[ACP] = (3E,5S)-3-[(2E,4E,8S,10E,12Z)-1-hydroxy-4,8-dimethyltetradeca-2,4,10,12-tetraen-1-ylidene]-5-[(4-hydroxyphenyl)methyl]pyrrolidine-2,4-dione + holo-[ACP] + H(+). Its pathway is mycotoxin biosynthesis. Functionally, trans-enoyl reductase; part of the gene cluster that mediates the biosynthesis of ilicicolin H, a 4-hydroxy-2-pyridonealkaloid that has potent and broad antifungal activities by inhibiting the mitochondrial respiration chain. IliB collaborates with the hybrid PKS-NRPS synthetase iliA to assemble the backbone of ilicicolin H. The PKS portion of iliA and trans-acting enoyl reductase iliB work together to construct an octaketide, and two methyl groups are introduced by the MT domain of iliA during the chain assembly. The nascent chain is then condensed with tyrosine, catalyzed by the iliA C domain, and the resulting PKS-NRPS hybrid is offloaded by the iliA RED domain to form an advanced tetramic acid intermediate. The biosynthesis of ilicicolin H starts with formation of the tetramic acid by the hybrid PKS-NRPS synthetase iliA with the partnering trans-enoyl reductase iliB since iliA lacks a designated enoylreductase (ER) domain. The cytochrome P450 monooxygenase iliC then catalyzes the ring expansion of the tetramate to the acyclic 2-pyridone. The pericyclase iliD further converts the acyclic 2-pyridone into 8-epi-ilicicolin H. 8-epi-ilicicolin H might then spontaneously convert to ilicicolin H since ilicicolin H is produced in the absence of the epimerase iliE, in contrast to what was observed for the Talaromyces variabilis ilicolin H biosynthetic pathway. The polypeptide is Trans-enoyl reductase iliB (Neonectria sp. (strain DH2)).